Reading from the N-terminus, the 670-residue chain is DNA ligase (670 aa).

NAD(+) contacts are provided by residues 32-36 (DAEYD), 81-82 (SL), and E111. K113 functions as the N6-AMP-lysine intermediate in the catalytic mechanism. NAD(+) contacts are provided by R134, E171, K290, and K314. Residues C408, C411, C426, and C432 each coordinate Zn(2+). The BRCT domain maps to 591–670 (EEALSLKGQT…DGLLAVLAGE (80 aa)).

Belongs to the NAD-dependent DNA ligase family. LigA subfamily. The cofactor is Mg(2+). Requires Mn(2+) as cofactor.

It carries out the reaction NAD(+) + (deoxyribonucleotide)n-3'-hydroxyl + 5'-phospho-(deoxyribonucleotide)m = (deoxyribonucleotide)n+m + AMP + beta-nicotinamide D-nucleotide.. In terms of biological role, DNA ligase that catalyzes the formation of phosphodiester linkages between 5'-phosphoryl and 3'-hydroxyl groups in double-stranded DNA using NAD as a coenzyme and as the energy source for the reaction. It is essential for DNA replication and repair of damaged DNA. This is DNA ligase from Shewanella sediminis (strain HAW-EB3).